Reading from the N-terminus, the 563-residue chain is Rab escort protein 1 (563 aa).

The segment at 538-563 (ELFKEETSPAENTTEEENDGGVEIED) is disordered. Acidic residues predominate over residues 550–563 (TTEEENDGGVEIED).

It belongs to the Rab GDI family. In terms of assembly, heterotrimer composed of the alpha subunit RGTA, the beta subunit RGTB and REP; within this trimer, RGTA and RGTB form the catalytic component, while REP mediates peptide substrate binding. As to expression, expressed in roots, leaves and flowers.

It localises to the cytoplasm. Its function is as follows. Substrate-binding subunit of the Rab geranylgeranyltransferase (GGTase) complex. Binds unprenylated Rab proteins and presents the substrate peptide to the catalytic component composed of the alpha subunit RGTA and the beta subunit RGTB. Preferentially binds the GDP-bound form of Rab and stimulates geranylgeranylation of various Rab GTPases in vitro. The protein is Rab escort protein 1 of Arabidopsis thaliana (Mouse-ear cress).